We begin with the raw amino-acid sequence, 350 residues long: Holliday junction branch migration complex subunit RuvB (350 aa).

Residues 1–22 (MDHTASLSPVRPEAQPTDDRER) form a disordered region. The interval 1 to 185 (MDHTASLSPV…FGIVERFEFY (185 aa)) is large ATPase domain (RuvB-L). ATP contacts are provided by residues leucine 24, arginine 25, glycine 66, lysine 69, threonine 70, threonine 71, 132–134 (EDY), arginine 175, tyrosine 185, and arginine 222. Residue threonine 70 coordinates Mg(2+). Positions 186–256 (TPEELAAIVQ…IVRAGLAHLK (71 aa)) are small ATPAse domain (RuvB-S). The tract at residues 259–350 (ELGLELHDIQ…PHSPEQGTLL (92 aa)) is head domain (RuvB-H). DNA contacts are provided by arginine 314 and arginine 319.

Belongs to the RuvB family. In terms of assembly, homohexamer. Forms an RuvA(8)-RuvB(12)-Holliday junction (HJ) complex. HJ DNA is sandwiched between 2 RuvA tetramers; dsDNA enters through RuvA and exits via RuvB. An RuvB hexamer assembles on each DNA strand where it exits the tetramer. Each RuvB hexamer is contacted by two RuvA subunits (via domain III) on 2 adjacent RuvB subunits; this complex drives branch migration. In the full resolvosome a probable DNA-RuvA(4)-RuvB(12)-RuvC(2) complex forms which resolves the HJ.

Its subcellular location is the cytoplasm. It carries out the reaction ATP + H2O = ADP + phosphate + H(+). The RuvA-RuvB-RuvC complex processes Holliday junction (HJ) DNA during genetic recombination and DNA repair, while the RuvA-RuvB complex plays an important role in the rescue of blocked DNA replication forks via replication fork reversal (RFR). RuvA specifically binds to HJ cruciform DNA, conferring on it an open structure. The RuvB hexamer acts as an ATP-dependent pump, pulling dsDNA into and through the RuvAB complex. RuvB forms 2 homohexamers on either side of HJ DNA bound by 1 or 2 RuvA tetramers; 4 subunits per hexamer contact DNA at a time. Coordinated motions by a converter formed by DNA-disengaged RuvB subunits stimulates ATP hydrolysis and nucleotide exchange. Immobilization of the converter enables RuvB to convert the ATP-contained energy into a lever motion, pulling 2 nucleotides of DNA out of the RuvA tetramer per ATP hydrolyzed, thus driving DNA branch migration. The RuvB motors rotate together with the DNA substrate, which together with the progressing nucleotide cycle form the mechanistic basis for DNA recombination by continuous HJ branch migration. Branch migration allows RuvC to scan DNA until it finds its consensus sequence, where it cleaves and resolves cruciform DNA. This is Holliday junction branch migration complex subunit RuvB from Treponema pallidum (strain Nichols).